A 206-amino-acid chain; its full sequence is dCTP deaminase, dUMP-forming (206 aa).

DCTP contacts are provided by residues 117–122, Asp135, 143–145, Gln163, Tyr177, Lys184, and Gln188; these read RSSFGR and TLE. The active-site Proton donor/acceptor is the Glu145.

The protein belongs to the dCTP deaminase family. In terms of assembly, homotrimer.

It carries out the reaction dCTP + 2 H2O = dUMP + NH4(+) + diphosphate. It participates in pyrimidine metabolism; dUMP biosynthesis; dUMP from dCTP: step 1/1. Bifunctional enzyme that catalyzes both the deamination of dCTP to dUTP and the hydrolysis of dUTP to dUMP without releasing the toxic dUTP intermediate. In Methanococcus maripaludis (strain C6 / ATCC BAA-1332), this protein is dCTP deaminase, dUMP-forming.